We begin with the raw amino-acid sequence, 272 residues long: Probable prolyl 4-hydroxylase 11 (272 aa).

Residues 1–55 lie on the Cytoplasmic side of the membrane; that stretch reads MSKSTSVSTILYLRQRLQGLKIYETSDLIQHINTFDELVGEQVSVDVKIEEKTKD. Residues 56-80 form a helical; Signal-anchor for type II membrane protein membrane-spanning segment; sequence MILLCSLSPLLTTLTCSMVKVAASL. Topologically, residues 81–272 are lumenal; that stretch reads RFPNERWLEV…KRHCLSLNLF (192 aa). Residues 179–272 form the Fe2OG dioxygenase domain; it reads NGETLQVINY…KRHCLSLNLF (94 aa). His197, Asp199, and His261 together coordinate Fe cation.

It belongs to the P4HA family. The cofactor is Fe(2+). It depends on L-ascorbate as a cofactor.

Its subcellular location is the endoplasmic reticulum membrane. It carries out the reaction L-prolyl-[collagen] + 2-oxoglutarate + O2 = trans-4-hydroxy-L-prolyl-[collagen] + succinate + CO2. Functionally, catalyzes the post-translational formation of 4-hydroxyproline in -Xaa-Pro-Gly- sequences in proline-rich peptide sequences of plant glycoproteins and other proteins. Hydroxyprolines are important constituent of many plant cell wall glycoproteins such as extensins, hydroxyproline-rich glycoproteins, lectins and arabinogalactan proteins. This is Probable prolyl 4-hydroxylase 11 from Arabidopsis thaliana (Mouse-ear cress).